The chain runs to 317 residues: Large ribosomal subunit protein uL10 (317 aa).

Tyr24 carries the phosphotyrosine modification. Position 59 is a phosphothreonine (Thr59). Lys264 is covalently cross-linked (Glycyl lysine isopeptide (Lys-Gly) (interchain with G-Cter in ubiquitin)). A disordered region spans residues 294-317; sequence APAKVEAKEESEESDEDMGFGLFD. A Glycyl lysine isopeptide (Lys-Gly) (interchain with G-Cter in SUMO1); alternate cross-link involves residue Lys297. Lys297 is covalently cross-linked (Glycyl lysine isopeptide (Lys-Gly) (interchain with G-Cter in SUMO2); alternate). Residues 302 to 311 are compositionally biased toward acidic residues; sequence EESEESDEDM. 2 positions are modified to phosphoserine: Ser304 and Ser307.

The protein belongs to the universal ribosomal protein uL10 family. P0 forms a pentameric complex by interaction with dimers of P1 and P2. Identified in a IGF2BP1-dependent mRNP granule complex containing untranslated mRNAs. Interacts with APEX1. Interacts with FMR1 isoform 6. In terms of processing, ubiquitinated at Lys-264 by RNF14 and RNF25 in response to ribosome collisions (ribosome stalling).

It is found in the nucleus. The protein resides in the cytoplasm. Ribosomal protein P0 is the functional equivalent of E.coli protein L10. The polypeptide is Large ribosomal subunit protein uL10 (RPLP0) (Homo sapiens (Human)).